The chain runs to 286 residues: Beta-lactamase SHV-3 (286 aa).

The N-terminal stretch at 1–21 is a signal peptide; the sequence is MRYIRLCIISLLATLPLAVHA. The Acyl-ester intermediate role is filled by Ser-66. Residues Cys-73 and Cys-119 are joined by a disulfide bond. The active-site Proton acceptor is the Glu-164. Substrate is bound at residue 230–232; it reads KTG.

This sequence belongs to the class-A beta-lactamase family.

The enzyme catalyses a beta-lactam + H2O = a substituted beta-amino acid. Functionally, this enzyme hydrolyzes cefotaxime, ceftazidime and other broad spectrum cephalosporins. This chain is Beta-lactamase SHV-3 (bla), found in Klebsiella pneumoniae.